Reading from the N-terminus, the 624-residue chain is Chaperone protein HtpG (624 aa).

The tract at residues methionine 1 to arginine 336 is a; substrate-binding. The b stretch occupies residues glutamate 337–lysine 552. The interval leucine 553–lysine 624 is c.

Belongs to the heat shock protein 90 family. Homodimer.

The protein localises to the cytoplasm. In terms of biological role, molecular chaperone. Has ATPase activity. This chain is Chaperone protein HtpG, found in Buchnera aphidicola subsp. Acyrthosiphon pisum (strain APS) (Acyrthosiphon pisum symbiotic bacterium).